Here is a 459-residue protein sequence, read N- to C-terminus: Ribulose bisphosphate carboxylase large chain (459 aa).

At K4 the chain carries N6,N6,N6-trimethyllysine. Substrate contacts are provided by N113 and T163. The active-site Proton acceptor is the K165. K167 is a binding site for substrate. Mg(2+) is bound by residues K191, D193, and E194. K191 is subject to N6-carboxylysine. Residue H284 is the Proton acceptor of the active site. Residues R285, H317, and S369 each coordinate substrate.

It belongs to the RuBisCO large chain family. Type I subfamily. In terms of assembly, heterohexadecamer of 8 large chains and 8 small chains; disulfide-linked. The disulfide link is formed within the large subunit homodimers. Mg(2+) is required as a cofactor. Post-translationally, the disulfide bond which can form in the large chain dimeric partners within the hexadecamer appears to be associated with oxidative stress and protein turnover.

The protein resides in the plastid. It localises to the chloroplast. The catalysed reaction is 2 (2R)-3-phosphoglycerate + 2 H(+) = D-ribulose 1,5-bisphosphate + CO2 + H2O. It carries out the reaction D-ribulose 1,5-bisphosphate + O2 = 2-phosphoglycolate + (2R)-3-phosphoglycerate + 2 H(+). RuBisCO catalyzes two reactions: the carboxylation of D-ribulose 1,5-bisphosphate, the primary event in carbon dioxide fixation, as well as the oxidative fragmentation of the pentose substrate in the photorespiration process. Both reactions occur simultaneously and in competition at the same active site. The polypeptide is Ribulose bisphosphate carboxylase large chain (Apium graveolens (Celery)).